A 177-amino-acid chain; its full sequence is Shikimate kinase (177 aa).

ATP is bound at residue 14–19 (GSGKST). Ser18 is a binding site for Mg(2+). The substrate site is built by Asp36, Arg60, and Gly82. Residue Arg120 participates in ATP binding. Arg139 is a substrate binding site.

This sequence belongs to the shikimate kinase family. Monomer. The cofactor is Mg(2+).

Its subcellular location is the cytoplasm. It catalyses the reaction shikimate + ATP = 3-phosphoshikimate + ADP + H(+). Its pathway is metabolic intermediate biosynthesis; chorismate biosynthesis; chorismate from D-erythrose 4-phosphate and phosphoenolpyruvate: step 5/7. Functionally, catalyzes the specific phosphorylation of the 3-hydroxyl group of shikimic acid using ATP as a cosubstrate. The protein is Shikimate kinase of Gloeobacter violaceus (strain ATCC 29082 / PCC 7421).